Here is a 195-residue protein sequence, read N- to C-terminus: Imidazoleglycerol-phosphate dehydratase (195 aa).

This sequence belongs to the imidazoleglycerol-phosphate dehydratase family.

It localises to the cytoplasm. The enzyme catalyses D-erythro-1-(imidazol-4-yl)glycerol 3-phosphate = 3-(imidazol-4-yl)-2-oxopropyl phosphate + H2O. It participates in amino-acid biosynthesis; L-histidine biosynthesis; L-histidine from 5-phospho-alpha-D-ribose 1-diphosphate: step 6/9. The chain is Imidazoleglycerol-phosphate dehydratase from Thiobacillus denitrificans (strain ATCC 25259 / T1).